The chain runs to 149 residues: Protein NrdI (149 aa).

The protein belongs to the NrdI family.

Probably involved in ribonucleotide reductase function. The sequence is that of Protein NrdI from Malacoplasma penetrans (strain HF-2) (Mycoplasma penetrans).